The primary structure comprises 67 residues: MKQTDIPIWERYTLTIEEASKYFRIGENKLRRLAEENKNANWLIMNGNRIQIKRKQFEKIIDTLDAI.

The protein is Excisionase from transposon Tn916 (xis) of Streptococcus agalactiae serotype V (strain ATCC BAA-611 / 2603 V/R).